A 652-amino-acid polypeptide reads, in one-letter code: Acetyl-coenzyme A synthetase (652 aa).

CoA-binding positions include 190 to 193 (RGGR) and T310. ATP-binding positions include 386–388 (GEP), 410–415 (DTWWQT), D499, and R514. S522 provides a ligand contact to CoA. Residue R525 coordinates ATP. Residues V536, H538, and V541 each coordinate Mg(2+). CoA is bound at residue R583. K608 bears the N6-acetyllysine mark.

This sequence belongs to the ATP-dependent AMP-binding enzyme family. The cofactor is Mg(2+). Acetylated. Deacetylation by the SIR2-homolog deacetylase activates the enzyme.

The catalysed reaction is acetate + ATP + CoA = acetyl-CoA + AMP + diphosphate. In terms of biological role, catalyzes the conversion of acetate into acetyl-CoA (AcCoA), an essential intermediate at the junction of anabolic and catabolic pathways. AcsA undergoes a two-step reaction. In the first half reaction, AcsA combines acetate with ATP to form acetyl-adenylate (AcAMP) intermediate. In the second half reaction, it can then transfer the acetyl group from AcAMP to the sulfhydryl group of CoA, forming the product AcCoA. In Methylorubrum extorquens (strain CM4 / NCIMB 13688) (Methylobacterium extorquens), this protein is Acetyl-coenzyme A synthetase.